Reading from the N-terminus, the 143-residue chain is NADH-quinone oxidoreductase subunit A (143 aa).

The next 3 membrane-spanning stretches (helical) occupy residues 7 to 27 (GFGN…GGYL), 63 to 83 (FYVV…LYPW), and 93 to 113 (FALF…AYAW).

The protein belongs to the complex I subunit 3 family. As to quaternary structure, NDH-1 is composed of 14 different subunits. Subunits NuoA, H, J, K, L, M, N constitute the membrane sector of the complex.

The protein resides in the cell inner membrane. It catalyses the reaction a quinone + NADH + 5 H(+)(in) = a quinol + NAD(+) + 4 H(+)(out). Functionally, NDH-1 shuttles electrons from NADH, via FMN and iron-sulfur (Fe-S) centers, to quinones in the respiratory chain. The immediate electron acceptor for the enzyme in this species is believed to be a menaquinone. Couples the redox reaction to proton translocation (for every two electrons transferred, four hydrogen ions are translocated across the cytoplasmic membrane), and thus conserves the redox energy in a proton gradient. The sequence is that of NADH-quinone oxidoreductase subunit A from Chlorobium limicola (strain DSM 245 / NBRC 103803 / 6330).